Here is a 393-residue protein sequence, read N- to C-terminus: Lipid-A-disaccharide synthase (393 aa).

The protein belongs to the LpxB family.

The enzyme catalyses a lipid X + a UDP-2-N,3-O-bis[(3R)-3-hydroxyacyl]-alpha-D-glucosamine = a lipid A disaccharide + UDP + H(+). Its pathway is bacterial outer membrane biogenesis; LPS lipid A biosynthesis. Its function is as follows. Condensation of UDP-2,3-diacylglucosamine and 2,3-diacylglucosamine-1-phosphate to form lipid A disaccharide, a precursor of lipid A, a phosphorylated glycolipid that anchors the lipopolysaccharide to the outer membrane of the cell. This Bordetella petrii (strain ATCC BAA-461 / DSM 12804 / CCUG 43448) protein is Lipid-A-disaccharide synthase.